The chain runs to 802 residues: Phenylalanine--tRNA ligase beta subunit (802 aa).

The 116-residue stretch at S40–I155 folds into the tRNA-binding domain. In terms of domain architecture, B5 spans K409–V484. Positions 462, 468, 471, and 472 each coordinate Mg(2+). In terms of domain architecture, FDX-ACB spans P709–R802.

This sequence belongs to the phenylalanyl-tRNA synthetase beta subunit family. Type 1 subfamily. Tetramer of two alpha and two beta subunits. Mg(2+) serves as cofactor.

It localises to the cytoplasm. It carries out the reaction tRNA(Phe) + L-phenylalanine + ATP = L-phenylalanyl-tRNA(Phe) + AMP + diphosphate + H(+). In Listeria monocytogenes serovar 1/2a (strain ATCC BAA-679 / EGD-e), this protein is Phenylalanine--tRNA ligase beta subunit.